Consider the following 84-residue polypeptide: MPKKAASPETKAASFETSLSELEQIVTRLESGELPLEEALNEFERGVQLARIGQQTLLQAEQRVQVLLSDDVDAPLTPFTPDTE.

This sequence belongs to the XseB family. As to quaternary structure, heterooligomer composed of large and small subunits.

The protein resides in the cytoplasm. The enzyme catalyses Exonucleolytic cleavage in either 5'- to 3'- or 3'- to 5'-direction to yield nucleoside 5'-phosphates.. Bidirectionally degrades single-stranded DNA into large acid-insoluble oligonucleotides, which are then degraded further into small acid-soluble oligonucleotides. The chain is Exodeoxyribonuclease 7 small subunit from Yersinia enterocolitica serotype O:8 / biotype 1B (strain NCTC 13174 / 8081).